Reading from the N-terminus, the 748-residue chain is NAD(P)H-quinone oxidoreductase subunit 5, chloroplastic (748 aa).

16 consecutive transmembrane segments (helical) span residues 9-29, 40-60, 89-109, 125-145, 147-167, 185-205, 219-239, 258-278, 280-300, 327-347, 354-374, 396-416, 425-445, 550-570, 611-631, and 728-748; these read WIIP…LLLF, WSFP…YLSI, IDPL…MVLI, FAYM…SNLI, IYIF…FWFT, GDFG…SFEF, NEVN…GAVA, TPIS…FLVA, LLPL…IGII, LGYM…FHLI, ALLF…VGYS, NAFL…CFWS, WLYS…TAFY, LFPM…GSPF, ATFS…FYKP, and YILL…FVFF.

Belongs to the complex I subunit 5 family. As to quaternary structure, NDH is composed of at least 16 different subunits, 5 of which are encoded in the nucleus.

It localises to the plastid. Its subcellular location is the chloroplast thylakoid membrane. It catalyses the reaction a plastoquinone + NADH + (n+1) H(+)(in) = a plastoquinol + NAD(+) + n H(+)(out). The catalysed reaction is a plastoquinone + NADPH + (n+1) H(+)(in) = a plastoquinol + NADP(+) + n H(+)(out). In terms of biological role, NDH shuttles electrons from NAD(P)H:plastoquinone, via FMN and iron-sulfur (Fe-S) centers, to quinones in the photosynthetic chain and possibly in a chloroplast respiratory chain. The immediate electron acceptor for the enzyme in this species is believed to be plastoquinone. Couples the redox reaction to proton translocation, and thus conserves the redox energy in a proton gradient. The polypeptide is NAD(P)H-quinone oxidoreductase subunit 5, chloroplastic (ndhF) (Cucumis sativus (Cucumber)).